The following is a 143-amino-acid chain: Small ribosomal subunit protein uS12 (143 aa).

Basic residues predominate over residues methionine 1 to aspartate 15. A disordered region spans residues methionine 1–tyrosine 27. The segment covering histidine 16–tyrosine 27 has biased composition (basic and acidic residues).

The protein belongs to the universal ribosomal protein uS12 family. In terms of assembly, component of the 40S small ribosomal subunit.

It localises to the cytoplasm. The protein resides in the cytosol. The protein localises to the rough endoplasmic reticulum. This is Small ribosomal subunit protein uS12 (rps23) from Ictalurus punctatus (Channel catfish).